A 207-amino-acid chain; its full sequence is Inner membrane-spanning protein YciB (207 aa).

6 helical membrane-spanning segments follow: residues 3–23, 51–71, 78–98, 105–125, 150–170, and 178–198; these read FLFD…AEGQ, VLLA…WLLL, TMLW…VWFH, WKPS…HAVF, FMWI…AYSF, and FKLF…GLYL.

The protein belongs to the YciB family.

Its subcellular location is the cell inner membrane. Functionally, plays a role in cell envelope biogenesis, maintenance of cell envelope integrity and membrane homeostasis. This chain is Inner membrane-spanning protein YciB, found in Methylibium petroleiphilum (strain ATCC BAA-1232 / LMG 22953 / PM1).